We begin with the raw amino-acid sequence, 468 residues long: Trehalose-2-sulfate acyltransferase PapA2 (468 aa).

The protein belongs to the PapA acyltransferase family.

It carries out the reaction 2-O-sulfo-alpha,alpha-trehalose + hexadecanoyl-CoA = 2-O-sulfo-2'-O-hexadecanoyl-alpha,alpha-trehalose + CoA. In terms of biological role, catalyzes the acylation of trehalose-2-sulfate by adding the palmitoyl group at the 2'-position to yield the intermediate trehalose-2-sulfate-2'-palmitate (SL659). This chain is Trehalose-2-sulfate acyltransferase PapA2 (papA2), found in Mycobacterium tuberculosis (strain ATCC 25177 / H37Ra).